The sequence spans 356 residues: Carbohydrate sulfotransferase 10 (356 aa).

At 1-6 (MHHQWL) the chain is on the cytoplasmic side. The helical; Signal-anchor for type II membrane protein transmembrane segment at 7–27 (LLAACFWVIFMFMVASKFITL) threads the bilayer. Residues 28 to 356 (TFKDPDVYSA…GYQKPDFLLN (329 aa)) lie on the Lumenal side of the membrane. Residue N99 is glycosylated (N-linked (GlcNAc...) asparagine). 3'-phosphoadenylyl sulfate-binding positions include 127–133 (PKVGNTQ) and 189–197 (RDPFERLIS). 2 N-linked (GlcNAc...) asparagine glycosylation sites follow: N228 and N316.

This sequence belongs to the sulfotransferase 2 family.

The protein localises to the golgi apparatus membrane. The enzyme catalyses 3-O-{beta-D-GlcA-(1-&gt;[3)-alpha-D-Xyl-(1-&gt;3)-beta-D-GlcA-(1-&gt;](n)-4)-beta-D-Xyl-(1-&gt;4)-Rib-ol-P-Rib-ol-P-3-beta-D-GalNAc-(1-&gt;3)-beta-D-GlcNAc-(1-&gt;4)-O-6-P-alpha-D-Man}-L-Thr-[protein] + 3'-phosphoadenylyl sulfate = 3-O-{O-3-S-beta-D-GlcA-(1-&gt;[3)-alpha-D-Xyl-(1-&gt;3)-beta-D-GlcA-(1-&gt;](n)-4)-beta-D-Xyl-(1-&gt;4)-Rib-ol-P-Rib-ol-P-3-beta-D-GalNAc-(1-&gt;3)-beta-D-GlcNAc-(1-&gt;4)-O-6-P-alpha-D-Man}-L-Thr-[protein] + adenosine 3',5'-bisphosphate + H(+). The catalysed reaction is 17beta-estradiol 3-O-(beta-D-glucuronate) + 3'-phosphoadenylyl sulfate = 17beta-estradiol 3-O-(3-sulfo-beta-D-glucuronate) + adenosine 3',5'-bisphosphate + H(+). It catalyses the reaction 17beta-estradiol 3-O-(beta-D-glucuronate) 17-sulfate + 3'-phosphoadenylyl sulfate = 17beta-estradiol 3-O-(3-sulfo-beta-D-glucuronate) 17-sulfate + adenosine 3',5'-bisphosphate + H(+). It carries out the reaction 17beta-estradiol 17-O-(beta-D-glucuronate) + 3'-phosphoadenylyl sulfate = 17beta-estradiol 17-O-(3-sulfo-beta-D-glucuronate) + adenosine 3',5'-bisphosphate + H(+). The enzyme catalyses 16alpha,17beta-estriol 3-O-(beta-D-glucuronate) + 3'-phosphoadenylyl sulfate = 16alpha,17beta-estriol 3-O-(3-sulfo-beta-D-glucuronate) + adenosine 3',5'-bisphosphate + H(+). The catalysed reaction is 16alpha,17beta-estriol 16-O-(beta-D-glucuronate) + 3'-phosphoadenylyl sulfate = 16alpha,17beta-estriol 16-O-(3-sulfo-beta-D-glucuronate) + adenosine 3',5'-bisphosphate + H(+). It catalyses the reaction 16alpha,17beta-estriol 17-O-(beta-D-glucuronate) + 3'-phosphoadenylyl sulfate = 16alpha,17beta-estriol 17-O-(3-sulfo-beta-D-glucuronate) + adenosine 3',5'-bisphosphate + H(+). It carries out the reaction estrone 3-O-(beta-D-glucuronate) + 3'-phosphoadenylyl sulfate = estrone 3-O-(3-sulfo-beta-D-glucuronate) + adenosine 3',5'-bisphosphate + H(+). The enzyme catalyses 3alpha,20alpha-dihydroxy-5beta-pregnane 3-O-(beta-D-glucuronate) + 3'-phosphoadenylyl sulfate = 3alpha,20alpha-dihydroxy-5beta-pregnane 3-O-(3-sulfo-beta-D-glucuronate) + adenosine 3',5'-bisphosphate + H(+). The catalysed reaction is testosterone 17-O-(beta-D-glucuronate) + 3'-phosphoadenylyl sulfate = testosterone 17-O-(3-sulfo-beta-D-glucuronate) + adenosine 3',5'-bisphosphate + H(+). It catalyses the reaction 3beta-androst-5-en-17-one 3-O-(beta-D-glucuronate) + 3'-phosphoadenylyl sulfate = 3beta-androst-5-en-17-one 3-O-(3-sulfo-beta-D-glucuronate) + adenosine 3',5'-bisphosphate + H(+). It carries out the reaction 3alpha,17alpha-dihydroxy-5beta-androstane-11-one-17beta-carboxylate 3-O-(beta-D-glucuronate) + 3'-phosphoadenylyl sulfate = 3alpha,17alpha-dihydroxy-5beta-androstane-11-one-17beta-carboxylate 3-O-(3-sulfo-beta-D-glucuronate) + adenosine 3',5'-bisphosphate + H(+). The enzyme catalyses 3alpha-hydroxyetiocholan-17-one 3-O-(beta-D-glucuronate) + 3'-phosphoadenylyl sulfate = 3alpha-hydroxyetiocholan-17-one 3-O-(3-sulfo-beta-D-glucuronate) + adenosine 3',5'-bisphosphate + H(+). The protein operates within steroid metabolism. It participates in protein modification; carbohydrate sulfation. Catalyzes the transfer of sulfate from 3'-phosphoadenylyl sulfate (PAPS) to position 3 of terminal glucuronic acid of both protein- and lipid-linked oligosaccharides. Participates in biosynthesis of HNK-1 carbohydrate structure 3-O-sulfo-beta-D-GlcA-(1-&gt;3)-beta-D-Gal-(1-&gt;4)-D-GlcNAc-R, a sulfated glucuronyl-lactosaminyl residue carried by many neural recognition molecules, which is involved in cell interactions during ontogenetic development and in synaptic plasticity in the adult. May be indirectly involved in synapse plasticity of the hippocampus, via its role in HNK-1 biosynthesis. Sulfates terminal glucuronyl residue of the laminin globular (LG)-domain binding epitope on DAG1/alpha-dystroglycan and prevents further polymerization by LARGE1 glycosyltransferase. Likely defines the chain length of LG epitope, conferring binding specificity to extracellular matrix components. Plays a role in down-regulating the steroid hormones. Sulfates glucuronidated estrogens and androgens with an impact in hormone cycle and fertility. Has a preference for glucuronyl moiety at the 3-hydroxyl group of a sterol ring rather than the 17-hydroxyl group, showing high catalytic efficiency for 17beta-estradiol 3-O-(beta-D-glucuronate) and dehydroepiandrosterone 3-O-(beta-D-glucuronate) hormones. In Pongo abelii (Sumatran orangutan), this protein is Carbohydrate sulfotransferase 10 (CHST10).